Here is a 340-residue protein sequence, read N- to C-terminus: DnaJ homolog subfamily B member 1 (340 aa).

Residues 2–70 form the J domain; that stretch reads GKDYYQTLGL…REIFDRYGEE (69 aa). Residues 68 to 90 form a disordered region; the sequence is GEEGLKGSGPSGGSSGGTNGTSF. Residues 73 to 86 are compositionally biased toward gly residues; sequence KGSGPSGGSSGGTN. Phosphothreonine is present on T307.

As to quaternary structure, interacts with DNAJC3. Interacts with HSF1 (via transactivation domain); this interaction results in the inhibition of heat shock- and HSF1-induced transcriptional activity during the attenuation and recovery phase period of the heat shock response. Interacts with BAG3.

It is found in the cytoplasm. The protein localises to the nucleus. The protein resides in the nucleolus. Its function is as follows. Interacts with HSP70 and can stimulate its ATPase activity. Stimulates the association between HSC70 and HIP. Negatively regulates heat shock-induced HSF1 transcriptional activity during the attenuation and recovery phase period of the heat shock response. Stimulates ATP hydrolysis and the folding of unfolded proteins mediated by HSPA1A/B (in vitro). This Bos taurus (Bovine) protein is DnaJ homolog subfamily B member 1 (DNAJB1).